Here is a 529-residue protein sequence, read N- to C-terminus: Bifunctional purine biosynthesis protein PurH (529 aa).

Residues 1–148 (MQQRRPVRRA…KNHKDVAIVV (148 aa)) form the MGS-like domain. Residue Lys287 is modified to N6-acetyllysine.

Belongs to the PurH family.

The catalysed reaction is (6R)-10-formyltetrahydrofolate + 5-amino-1-(5-phospho-beta-D-ribosyl)imidazole-4-carboxamide = 5-formamido-1-(5-phospho-D-ribosyl)imidazole-4-carboxamide + (6S)-5,6,7,8-tetrahydrofolate. The enzyme catalyses IMP + H2O = 5-formamido-1-(5-phospho-D-ribosyl)imidazole-4-carboxamide. It functions in the pathway purine metabolism; IMP biosynthesis via de novo pathway; 5-formamido-1-(5-phospho-D-ribosyl)imidazole-4-carboxamide from 5-amino-1-(5-phospho-D-ribosyl)imidazole-4-carboxamide (10-formyl THF route): step 1/1. The protein operates within purine metabolism; IMP biosynthesis via de novo pathway; IMP from 5-formamido-1-(5-phospho-D-ribosyl)imidazole-4-carboxamide: step 1/1. This chain is Bifunctional purine biosynthesis protein PurH, found in Escherichia coli O17:K52:H18 (strain UMN026 / ExPEC).